Reading from the N-terminus, the 126-residue chain is Desulfoferrodoxin (126 aa).

Fe cation is bound by residues cysteine 10, cysteine 13, cysteine 29, cysteine 30, histidine 49, histidine 69, histidine 75, cysteine 116, and histidine 119.

The protein belongs to the desulfoferrodoxin family. As to quaternary structure, homodimer. Fe(3+) is required as a cofactor. It depends on Cu(2+) as a cofactor.

It catalyses the reaction reduced [rubredoxin] + superoxide + 2 H(+) = oxidized [rubredoxin] + H2O2. Its function is as follows. Catalyzes the one-electron reduction of superoxide anion radical to hydrogen peroxide at a nonheme ferrous iron center. Plays a fundamental role in case of oxidative stress via its superoxide detoxification activity. This chain is Desulfoferrodoxin (dfx), found in Desulfarculus baarsii (strain ATCC 33931 / DSM 2075 / LMG 7858 / VKM B-1802 / 2st14).